We begin with the raw amino-acid sequence, 356 residues long: Serine/arginine-rich splicing factor RS41 (356 aa).

2 RRM domains span residues 2 to 74 (KPVF…WTKN) and 96 to 167 (KTLF…YAVK). The disordered stretch occupies residues 73–92 (KNDRGGAGRSGGSRRSSSGL). Over residues 168 to 186 (DDDSRGNGYSPERRRDRSP) the composition is skewed to basic and acidic residues. The segment at 168–356 (DDDSRGNGYS…SPSRSPPAEE (189 aa)) is disordered. 6 positions are modified to phosphoserine: Ser192, Ser194, Ser210, Ser239, Ser254, and Ser274. Residues 238–253 (LSPDYKRDDRRRERVA) show a composition bias toward basic and acidic residues. Tandem repeats lie at residues 267-278 (KGRGESRSPPPY), 279-290 (EKRRESRSPPPY), and 291-302 (EKRRESRSPPPY). The tract at residues 267-307 (KGRGESRSPPPYEKRRESRSPPPYEKRRESRSPPPYEKRRE) is 4 X 12 AA tandem repeats of [KE]-[GK]-R -[GR]-E-S-R-S-P-P-P-Y. The span at 268 to 306 (GRGESRSPPPYEKRRESRSPPPYEKRRESRSPPPYEKRR) shows a compositional bias: basic and acidic residues. The 4; truncated repeat unit spans residues 303–307 (EKRRE). Ser309, Ser324, Ser342, Ser347, and Ser351 each carry phosphoserine.

Belongs to the splicing factor SR family. RS subfamily. In terms of assembly, component of the spliceosome. Interacts with RCF3 and CPL1. Interacts with DRB1/HYL1 and SE. In terms of tissue distribution, leaves, stem, roots and flowers.

The protein resides in the nucleus. It is found in the nucleus speckle. Required for constitutive and alternative pre-mRNA splicing. Involved in primary miRNA processing and pri-miRNA biogenesis. Binds both intronless and intron-containing pri-miRNAs. The polypeptide is Serine/arginine-rich splicing factor RS41 (RS41) (Arabidopsis thaliana (Mouse-ear cress)).